The following is a 132-amino-acid chain: Small ribosomal subunit protein uS9 (132 aa).

Residues 104-132 (GYLTRDPRMKERKKYGLRKARRAPQFSKR) are disordered. Basic residues predominate over residues 113–132 (KERKKYGLRKARRAPQFSKR).

The protein belongs to the universal ribosomal protein uS9 family.

In Natranaerobius thermophilus (strain ATCC BAA-1301 / DSM 18059 / JW/NM-WN-LF), this protein is Small ribosomal subunit protein uS9.